A 272-amino-acid polypeptide reads, in one-letter code: MARLAAFDMDGTLLMPDHHLGEKTLSTLARLRERDITLTFATGRHALEMQHILGALSLDAYLITGNGTRVHSLEGELLHRDDLPADVAELVLYQQWDTRASMHIFNDDGWFTGKEIPALLQAFVYSGFRYQIIDVKKMPLGSVTKICFCGDHDDLTRLQIQLYEALGERAHLCFSATDCLEVLPVGCNKGAALTVLTQHLGLSLRDCMAFGDAMNDREMLGSVGSGFIMGNAMPQLRAELPHLPVIGHCRNQAVSHYLTHWLDYPHLPYSPE.

The Nucleophile role is filled by Asp-8. Residues Asp-8, Asp-10, and Asp-212 each contribute to the Mg(2+) site.

This sequence belongs to the HAD-like hydrolase superfamily. Cof family. Mg(2+) is required as a cofactor.

It carries out the reaction 4-amino-2-methyl-5-(diphosphooxymethyl)pyrimidine + H2O = 4-amino-2-methyl-5-(phosphooxymethyl)pyrimidine + phosphate + H(+). Catalyzes the hydrolysis of 4-amino-2-methyl-5-hydroxymethylpyrimidine pyrophosphate (HMP-PP) to 4-amino-2-methyl-5-hydroxymethylpyrimidine phosphate (HMP-P). This Escherichia coli (strain UTI89 / UPEC) protein is HMP-PP phosphatase.